Here is a 150-residue protein sequence, read N- to C-terminus: Large ribosomal subunit protein bL9 (150 aa).

This sequence belongs to the bacterial ribosomal protein bL9 family.

In terms of biological role, binds to the 23S rRNA. This is Large ribosomal subunit protein bL9 from Streptococcus pyogenes serotype M5 (strain Manfredo).